Reading from the N-terminus, the 275-residue chain is Rhamnulose-1-phosphate aldolase (275 aa).

Glu117 is an active-site residue. Zn(2+)-binding residues include His141, His143, and His212.

Belongs to the aldolase class II family. RhaD subfamily. As to quaternary structure, homotetramer. Requires Zn(2+) as cofactor.

It localises to the cytoplasm. The enzyme catalyses L-rhamnulose 1-phosphate = (S)-lactaldehyde + dihydroxyacetone phosphate. It functions in the pathway carbohydrate degradation; L-rhamnose degradation; glycerone phosphate from L-rhamnose: step 3/3. In terms of biological role, catalyzes the reversible cleavage of L-rhamnulose-1-phosphate to dihydroxyacetone phosphate (DHAP) and L-lactaldehyde. This Salmonella choleraesuis (strain SC-B67) protein is Rhamnulose-1-phosphate aldolase.